The following is a 413-amino-acid chain: Phosphopentomutase (413 aa).

6 residues coordinate Mn(2+): D11, D306, H311, D347, H348, and H359.

The protein belongs to the phosphopentomutase family. The cofactor is Mn(2+).

The protein localises to the cytoplasm. The catalysed reaction is 2-deoxy-alpha-D-ribose 1-phosphate = 2-deoxy-D-ribose 5-phosphate. It carries out the reaction alpha-D-ribose 1-phosphate = D-ribose 5-phosphate. Its pathway is carbohydrate degradation; 2-deoxy-D-ribose 1-phosphate degradation; D-glyceraldehyde 3-phosphate and acetaldehyde from 2-deoxy-alpha-D-ribose 1-phosphate: step 1/2. Isomerase that catalyzes the conversion of deoxy-ribose 1-phosphate (dRib-1-P) and ribose 1-phosphate (Rib-1-P) to deoxy-ribose 5-phosphate (dRib-5-P) and ribose 5-phosphate (Rib-5-P), respectively. The chain is Phosphopentomutase from Helicobacter pylori (strain HPAG1).